Consider the following 639-residue polypeptide: DNA gyrase subunit B (639 aa).

Basic and acidic residues predominate over residues 392-402 (QAEELTRRKSA). The disordered stretch occupies residues 392 to 417 (QAEELTRRKSALESTSLPGKLADCQS). Residues 423 to 537 (SELFIVEGDS…AGYVYAAQPP (115 aa)) enclose the Toprim domain. Mg(2+) contacts are provided by E429, D502, and D504.

Belongs to the type II topoisomerase GyrB family. In terms of assembly, heterotetramer, composed of two GyrA and two GyrB chains. In the heterotetramer, GyrA contains the active site tyrosine that forms a transient covalent intermediate with DNA, while GyrB binds cofactors and catalyzes ATP hydrolysis. It depends on Mg(2+) as a cofactor. Mn(2+) serves as cofactor. The cofactor is Ca(2+).

It localises to the cytoplasm. It catalyses the reaction ATP-dependent breakage, passage and rejoining of double-stranded DNA.. Functionally, a type II topoisomerase that negatively supercoils closed circular double-stranded (ds) DNA in an ATP-dependent manner to modulate DNA topology and maintain chromosomes in an underwound state. Negative supercoiling favors strand separation, and DNA replication, transcription, recombination and repair, all of which involve strand separation. Also able to catalyze the interconversion of other topological isomers of dsDNA rings, including catenanes and knotted rings. Type II topoisomerases break and join 2 DNA strands simultaneously in an ATP-dependent manner. The polypeptide is DNA gyrase subunit B (Haloferax lucentense (strain DSM 14919 / JCM 9276 / NCIMB 13854 / Aa 2.2) (Haloferax alicantei)).